A 265-amino-acid polypeptide reads, in one-letter code: Glutamate racemase (265 aa).

Residues 7 to 8 and 39 to 40 each bind substrate; these read DS and YG. The Proton donor/acceptor role is filled by Cys-70. Residue 71-72 participates in substrate binding; the sequence is NT. Cys-182 (proton donor/acceptor) is an active-site residue. 183–184 lines the substrate pocket; sequence TH.

This sequence belongs to the aspartate/glutamate racemases family.

It catalyses the reaction L-glutamate = D-glutamate. The protein operates within cell wall biogenesis; peptidoglycan biosynthesis. In terms of biological role, provides the (R)-glutamate required for cell wall biosynthesis. This Lachnospira eligens (strain ATCC 27750 / DSM 3376 / VPI C15-48 / C15-B4) (Eubacterium eligens) protein is Glutamate racemase.